A 220-amino-acid chain; its full sequence is Glycerol-3-phosphate acyltransferase (220 aa).

Transmembrane regions (helical) follow at residues 11–31 (INVI…GYAL), 70–90 (LLIL…SKLF), 96–116 (LQWM…FLNF), 127–147 (GSVV…WFFV), 153–173 (ISSL…FFVP), and 193–213 (MVLI…NLLA).

This sequence belongs to the PlsY family. In terms of assembly, probably interacts with PlsX.

Its subcellular location is the cell inner membrane. The catalysed reaction is an acyl phosphate + sn-glycerol 3-phosphate = a 1-acyl-sn-glycero-3-phosphate + phosphate. Its pathway is lipid metabolism; phospholipid metabolism. Its function is as follows. Catalyzes the transfer of an acyl group from acyl-phosphate (acyl-PO(4)) to glycerol-3-phosphate (G3P) to form lysophosphatidic acid (LPA). This enzyme utilizes acyl-phosphate as fatty acyl donor, but not acyl-CoA or acyl-ACP. The chain is Glycerol-3-phosphate acyltransferase from Helicobacter acinonychis (strain Sheeba).